An 895-amino-acid chain; its full sequence is WD repeat-containing protein 36 (895 aa).

WD repeat units lie at residues 30-63, 72-101, 110-143, 152-186, 193-230, 237-272, 277-320, and 327-361; these read VVRF…LVAV, CCMA…IVHT, HFLQ…LQLT, SAIL…LLYT, GVTA…MKFR, TSIS…INQM, STAI…RFRM, and TNIR…FNKS. A phosphoserine mark is found at Ser382 and Ser399. WD repeat units lie at residues 389 to 428, 441 to 475, 486 to 522, 527 to 562, 564 to 605, and 607 to 645; these read TKFA…GAYF, ATAV…HRGS, VRGV…HSVS, PNIM…VREF, GHQG…DCFL, and DSAP…SVVS.

As to quaternary structure, part of the small subunit (SSU) processome, composed of more than 70 proteins and the RNA chaperone small nucleolar RNA (snoRNA) U3. In terms of tissue distribution, expressed in heart, placenta, liver, skeletal muscle, kidney and pancreas. In ocular tissues, strong expression in iris, sclera, ciliary muscle, ciliary body, retina and optic nerve.

It is found in the nucleus. Its subcellular location is the nucleolus. In terms of biological role, part of the small subunit (SSU) processome, first precursor of the small eukaryotic ribosomal subunit. During the assembly of the SSU processome in the nucleolus, many ribosome biogenesis factors, an RNA chaperone and ribosomal proteins associate with the nascent pre-rRNA and work in concert to generate RNA folding, modifications, rearrangements and cleavage as well as targeted degradation of pre-ribosomal RNA by the RNA exosome. Involved in the nucleolar processing of SSU 18S rRNA. Involved in T-cell activation and highly coregulated with IL2. The polypeptide is WD repeat-containing protein 36 (Homo sapiens (Human)).